Here is a 330-residue protein sequence, read N- to C-terminus: Aspartate--ammonia ligase (330 aa).

It belongs to the class-II aminoacyl-tRNA synthetase family. AsnA subfamily.

The protein resides in the cytoplasm. It catalyses the reaction L-aspartate + NH4(+) + ATP = L-asparagine + AMP + diphosphate + H(+). Its pathway is amino-acid biosynthesis; L-asparagine biosynthesis; L-asparagine from L-aspartate (ammonia route): step 1/1. This chain is Aspartate--ammonia ligase, found in Salmonella schwarzengrund (strain CVM19633).